The chain runs to 123 residues: UPF0382 membrane protein YwdK (123 aa).

4 consecutive transmembrane segments (helical) span residues 3 to 23 (VFII…AFGA), 49 to 69 (ALGL…GSVT), 71 to 91 (AGWL…ILSV), and 96 to 116 (ILGA…IMIV).

It belongs to the UPF0382 family.

The protein resides in the cell membrane. The protein is UPF0382 membrane protein YwdK (ywdK) of Bacillus subtilis (strain 168).